We begin with the raw amino-acid sequence, 291 residues long: Bifunctional protein FolD (291 aa).

Residues 167–169 (GRS) and serine 192 each bind NADP(+).

The protein belongs to the tetrahydrofolate dehydrogenase/cyclohydrolase family. As to quaternary structure, homodimer.

It carries out the reaction (6R)-5,10-methylene-5,6,7,8-tetrahydrofolate + NADP(+) = (6R)-5,10-methenyltetrahydrofolate + NADPH. The enzyme catalyses (6R)-5,10-methenyltetrahydrofolate + H2O = (6R)-10-formyltetrahydrofolate + H(+). Its pathway is one-carbon metabolism; tetrahydrofolate interconversion. In terms of biological role, catalyzes the oxidation of 5,10-methylenetetrahydrofolate to 5,10-methenyltetrahydrofolate and then the hydrolysis of 5,10-methenyltetrahydrofolate to 10-formyltetrahydrofolate. The protein is Bifunctional protein FolD of Leptospira biflexa serovar Patoc (strain Patoc 1 / Ames).